Here is a 197-residue protein sequence, read N- to C-terminus: Endoribonuclease YbeY (197 aa).

Positions 156, 160, and 166 each coordinate Zn(2+).

It belongs to the endoribonuclease YbeY family. Zn(2+) is required as a cofactor.

It localises to the cytoplasm. Its function is as follows. Single strand-specific metallo-endoribonuclease involved in late-stage 70S ribosome quality control and in maturation of the 3' terminus of the 16S rRNA. This is Endoribonuclease YbeY from Cupriavidus metallidurans (strain ATCC 43123 / DSM 2839 / NBRC 102507 / CH34) (Ralstonia metallidurans).